A 341-amino-acid polypeptide reads, in one-letter code: Ribosomal RNA small subunit methyltransferase H (341 aa).

Residues Gly47–Tyr49, Asp64, Phe97, Asp109, and Gln116 contribute to the S-adenosyl-L-methionine site.

The protein belongs to the methyltransferase superfamily. RsmH family.

Its subcellular location is the cytoplasm. It catalyses the reaction cytidine(1402) in 16S rRNA + S-adenosyl-L-methionine = N(4)-methylcytidine(1402) in 16S rRNA + S-adenosyl-L-homocysteine + H(+). Specifically methylates the N4 position of cytidine in position 1402 (C1402) of 16S rRNA. The polypeptide is Ribosomal RNA small subunit methyltransferase H (Allorhizobium ampelinum (strain ATCC BAA-846 / DSM 112012 / S4) (Agrobacterium vitis (strain S4))).